The primary structure comprises 206 residues: Ras-related protein Rab-18 (206 aa).

N-acetylmethionine is present on Met-1. GTP-binding residues include Ser-17, Gly-20, Lys-21, Ser-22, Ser-23, Asp-34, Pro-35, Thr-40, Gly-66, Lys-123, and Asp-125. Ser-22 serves as a coordination point for Mg(2+). 2 consecutive short sequence motifs (switch) follow at residues 31–45 (DTFD…GVDF) and 63–80 (DTAG…YYRG). Thr-40 is a Mg(2+) binding site. Ser-144 is subject to Phosphoserine. A GTP-binding site is contributed by Ala-152. Cys-199 carries the S-palmitoyl cysteine lipid modification. A Cysteine methyl ester modification is found at Cys-203. Cys-203 carries S-geranylgeranyl cysteine lipidation. The propeptide at 204-206 (SVL) is removed in mature form.

The protein belongs to the small GTPase superfamily. Rab family. In terms of assembly, interacts (in GTP-bound form) with ZFYVE1. Interacts with ZW10 and this interaction is enhanced in the presence of ZFYVE1. Interacts with BSCL2. As to quaternary structure, (Microbial infection) Interacts with Hepatitis C virus (HCV) non-structural protein 5A; this interaction may promote the association of NS5A and other viral replicase components with lipid droplets. The cofactor is Mg(2+). As to expression, ubiquitous.

The protein resides in the endoplasmic reticulum membrane. It is found in the golgi apparatus. The protein localises to the cis-Golgi network membrane. It localises to the lipid droplet. Its subcellular location is the apical cell membrane. The enzyme catalyses GTP + H2O = GDP + phosphate + H(+). Regulated by guanine nucleotide exchange factor (GEF) RAB3GAP1-RAB3GAP2 complex at the cis-Golgi membrane which promotes the exchange of bound GDP for free GTP. Regulated by GTPase activating protein (GAP) TBC1D20 at the ER membrane which increases the GTP hydrolysis activity. Inhibited by GDP dissociation inhibitors (GDIs) which prevent Rab-GDP dissociation. The small GTPases Rab are key regulators of intracellular membrane trafficking, from the formation of transport vesicles to their fusion with membranes. Rabs cycle between an inactive GDP-bound form and an active GTP-bound form that is able to recruit to membranes different sets of downstream effectors directly responsible for vesicle formation, movement, tethering and fusion. RAB18 is required for the localization of ZFYVE1 to lipid droplets and for its function in mediating the formation of endoplasmic reticulum-lipid droplets (ER-LD) contacts. Also required for maintaining endoplasmic reticulum structure. Plays a role in apical endocytosis/recycling. Plays a key role in eye and brain development and neurodegeneration. This Homo sapiens (Human) protein is Ras-related protein Rab-18.